The following is an 824-amino-acid chain: Ent-copalyl diphosphate synthase AN1, chloroplastic (824 aa).

The N-terminal 63 residues, 1-63 (MPYPHPYPWQ…SSAKVFQTSR (63 aa)), are a transit peptide targeting the chloroplast. The interval 1–87 (MPYPHPYPWQ…QDLEDEHQAE (87 aa)) is disordered. The span at 44-63 (ATTTQQPDNVSSAKVFQTSR) shows a compositional bias: polar residues. Residue Lys-247 participates in substrate binding. 2 residues coordinate Mg(2+): Asp-379 and Asp-381. A DXDD motif motif is present at residues 379–382 (DVDD). Lys-465 provides a ligand contact to substrate.

It belongs to the terpene synthase family. Tpsc subfamily. The cofactor is Mg(2+).

The protein resides in the plastid. The protein localises to the chloroplast. It carries out the reaction (2E,6E,10E)-geranylgeranyl diphosphate = ent-copalyl diphosphate. The protein operates within plant hormone biosynthesis; gibberellin biosynthesis. Involved in giberellin biosynthesis. Catalyzes the conversion of geranylgeranyl diphosphate to the gibberellin precursor ent-copalyl diphosphate. The protein is Ent-copalyl diphosphate synthase AN1, chloroplastic of Zea mays (Maize).